The sequence spans 306 residues: Mitochondrial brown fat uncoupling protein 1 (306 aa).

Topologically, residues 1–10 (MVGTTATDVA) are mitochondrial intermembrane. The chain crosses the membrane as a helical span at residues 11-32 (PTMGVKIFSAGVAACLADVITF). Solcar repeat units lie at residues 11–102 (PTMG…VQEF), 110–200 (PSLR…MKGA), and 209–294 (DDVP…LKRE). Over 33–73 (PLDTAKVRLQIQGECQTTSGIRYKGVLGTITTLAKTEGPLK) the chain is Mitochondrial matrix. Lys56 is a fatty acid 16:0 binding site. Residues 74-96 (LYSGLPAGLQRQISFASLRIGLY) traverse the membrane as a helical segment. Residues 97–115 (DTVQEFWGGEEATPSLRSK) are Mitochondrial intermembrane-facing. Residues 116–132 (ICAGLTTGGVAVFIGQP) form a helical membrane-spanning segment. Topologically, residues 133 to 177 (TEVVKVRLQAQSHLHGLKPRYTGTYNAYRIIATTESLSTLWKGTT) are mitochondrial matrix. The helical transmembrane segment at 178–194 (PNLLRNIIINCTELVTY) threads the bilayer. Residues 195 to 211 (DLMKGALVRNDILADDV) lie on the Mitochondrial intermembrane side of the membrane. A helical membrane pass occupies residues 212–231 (PCHLLSALIAGFCTTLLSSP). Residues 232–265 (VDVVKTRFINSPQGQYTSVPSCAMSMLTKEGPTA) are Mitochondrial matrix-facing. Residue Cys253 is modified to Cysteine sulfenic acid (-SOH). A helical transmembrane segment spans residues 266–288 (FFKGFAPSFLRLASWNVIMFVCF). Lys268 contributes to the fatty acid 16:0 binding site. The Mitochondrial intermembrane segment spans residues 289–306 (EKLKRELMKSRQTVDCAT).

It belongs to the mitochondrial carrier (TC 2.A.29) family. As to quaternary structure, most probably functions as a monomer. Binds one purine nucleotide per monomer. However, has also been suggested to function as a homodimer or a homotetramer. Tightly associates with cardiolipin in the mitochondrion inner membrane; may stabilize and regulate its activity. May undergo sulfenylation upon cold exposure. May increase the sensitivity of UCP1 thermogenic function to the activation by noradrenaline probably through structural effects. In terms of processing, may undergo ubiquitin-mediated proteasomal degradation.

The protein localises to the mitochondrion inner membrane. It carries out the reaction H(+)(in) = H(+)(out). With respect to regulation, has no constitutive proton transporter activity and has to be activated by long-chain fatty acids/LCFAs. Inhibited by purine nucleotides. Both purine nucleotides and LCFAs bind the cytosolic side of the transporter and directly compete to activate or inhibit it. Activated by noradrenaline and reactive oxygen species. Despite lacking canonical translational encoding for selenocysteine, a small pool of the protein has been observed to selectively incorporate selenocysteine at 'Cys-253'. Selenocysteine-modified protein is highly sensitive to redox modification and may constitute a pool of protein highly sensitive to activation by elevated levels of reactive oxygen species (ROS). Mitochondrial protein responsible for thermogenic respiration, a specialized capacity of brown adipose tissue and beige fat that participates in non-shivering adaptive thermogenesis to temperature and diet variations and more generally to the regulation of energy balance. Functions as a long-chain fatty acid/LCFA and proton symporter, simultaneously transporting one LCFA and one proton through the inner mitochondrial membrane. However, LCFAs remaining associated with the transporter via their hydrophobic tails, it results in an apparent transport of protons activated by LCFAs. Thereby, dissipates the mitochondrial proton gradient and converts the energy of substrate oxydation into heat instead of ATP. Regulates the production of reactive oxygen species/ROS by mitochondria. This is Mitochondrial brown fat uncoupling protein 1 from Ochotona dauurica (Daurian pika).